Here is a 410-residue protein sequence, read N- to C-terminus: Peptidase T (410 aa).

Residue His-78 participates in Zn(2+) binding. Residue Asp-80 is part of the active site. Asp-140 lines the Zn(2+) pocket. Glu-174 (proton acceptor) is an active-site residue. Zn(2+) contacts are provided by Glu-175, Asp-197, and His-379.

The protein belongs to the peptidase M20B family. Zn(2+) is required as a cofactor.

It localises to the cytoplasm. It carries out the reaction Release of the N-terminal residue from a tripeptide.. In terms of biological role, cleaves the N-terminal amino acid of tripeptides. The protein is Peptidase T of Vibrio cholerae serotype O1 (strain ATCC 39315 / El Tor Inaba N16961).